The primary structure comprises 433 residues: Dihydroorotase (433 aa).

His63 and His65 together coordinate Zn(2+). Substrate contacts are provided by residues 65-67 and Asn97; that span reads HLR. Residues Asp155, His182, and His235 each contribute to the Zn(2+) site. Asn283 is a binding site for substrate. Asp310 is a binding site for Zn(2+). Asp310 is a catalytic residue. His314 serves as a coordination point for substrate.

The protein belongs to the metallo-dependent hydrolases superfamily. DHOase family. Class I DHOase subfamily. Zn(2+) is required as a cofactor.

It carries out the reaction (S)-dihydroorotate + H2O = N-carbamoyl-L-aspartate + H(+). Its pathway is pyrimidine metabolism; UMP biosynthesis via de novo pathway; (S)-dihydroorotate from bicarbonate: step 3/3. Its function is as follows. Catalyzes the reversible cyclization of carbamoyl aspartate to dihydroorotate. This is Dihydroorotase from Anaeromyxobacter dehalogenans (strain 2CP-C).